Reading from the N-terminus, the 171-residue chain is Translationally-controlled tumor protein homolog (171 aa).

In terms of domain architecture, TCTP spans methionine 1 to cysteine 171.

The protein belongs to the TCTP family.

It localises to the cytoplasm. Its function is as follows. Involved in calcium binding and microtubule stabilization. The sequence is that of Translationally-controlled tumor protein homolog (tpt1) from Labeo rohita (Indian major carp).